Consider the following 1139-residue polypeptide: Liprin-alpha (1139 aa).

Coiled coils occupy residues 30-144 (PSDR…SLRM), 172-298 (EHHK…KNQI), 329-517 (IRDL…AQFQ), and 655-701 (QDAQ…EFYD). Disordered regions lie at residues 700–720 (YDDQGISTRSSPRASPQLDNM) and 764–847 (NQFD…DRRK). Polar residues-rich tracts occupy residues 704-719 (GISTRSSPRASPQLDN) and 778-787 (PASSVASSTD). SAM domains are found at residues 867-933 (WNGP…MVSL), 952-1016 (NHEY…LKKV), and 1040-1109 (WSNE…LVND).

Belongs to the liprin family. Liprin-alpha subfamily. As to expression, detected in vulval muscle and other cells near the vulva; in neurons located in the lateral ganglion, posterior ganglion, ventral cord and lateral body; and in pharyngeal and body wall muscle cells.

It is found in the synapse. May play a role in regulating the structure of the neuronal region, called the active zone, from which synaptic vesicles send neurotransmitter signals across the synapse. This may be in association with the liprin-beta protein hlb-1. The chain is Liprin-alpha from Caenorhabditis elegans.